A 415-amino-acid polypeptide reads, in one-letter code: MTSPALTAASVTPSRNTTSPDTTSHRPASVGVVSPVFLRFDEPLPLASGQSLNAYELAVETYGTLNAERSNAVLICHALNASHHVAGVAAGNPKDVGWWDNMVGPGKPVDTDVFFVIGINNLGSCFGSTGPASTNPETGLPWGAAFPVLTVEDWVRAQARVADHFGIQRFAAVMGGSLGGMQALSWAITLPERVAHCVVIASTPRLSAQNIGFNEVARRAIITDPGFHGGNYYAHDTVPHRGLAVARMIGHITYLSDDDMAEKFGRTQREPAENGAYRYGYDVEFEVESYLRYQGEKFSRYFDANTYLLITRALDYFDPARATGGDLARALSSAQADFLLVSFTTDWRFPPERSRDIVRALLKNGSPVTYAEIDAPHGHDAFLLEDARYHAVVSAYYERIARNLGLTRQAEESAA.

Over residues 1–26 (MTSPALTAASVTPSRNTTSPDTTSHR) the composition is skewed to polar residues. Positions 1 to 27 (MTSPALTAASVTPSRNTTSPDTTSHRP) are disordered. Residues 71 to 386 (NAVLICHALN…HGHDAFLLED (316 aa)) form the AB hydrolase-1 domain. Serine 177 acts as the Nucleophile in catalysis. Substrate is bound at residue arginine 247. Residues aspartate 346 and histidine 379 contribute to the active site. Aspartate 380 contributes to the substrate binding site.

The protein belongs to the AB hydrolase superfamily. MetX family. Homodimer.

The protein resides in the cytoplasm. It catalyses the reaction L-homoserine + succinyl-CoA = O-succinyl-L-homoserine + CoA. It participates in amino-acid biosynthesis; L-methionine biosynthesis via de novo pathway; O-succinyl-L-homoserine from L-homoserine: step 1/1. Functionally, transfers a succinyl group from succinyl-CoA to L-homoserine, forming succinyl-L-homoserine. The polypeptide is Homoserine O-succinyltransferase (Bordetella avium (strain 197N)).